Reading from the N-terminus, the 159-residue chain is Putative 4-hydroxy-4-methyl-2-oxoglutarate aldolase (159 aa).

Residues 75-78 (GDQL) and Arg97 contribute to the substrate site. Asp98 lines the a divalent metal cation pocket.

It belongs to the class II aldolase/RraA-like family. Homotrimer. A divalent metal cation is required as a cofactor.

The catalysed reaction is 4-hydroxy-4-methyl-2-oxoglutarate = 2 pyruvate. It carries out the reaction oxaloacetate + H(+) = pyruvate + CO2. Functionally, catalyzes the aldol cleavage of 4-hydroxy-4-methyl-2-oxoglutarate (HMG) into 2 molecules of pyruvate. Also contains a secondary oxaloacetate (OAA) decarboxylase activity due to the common pyruvate enolate transition state formed following C-C bond cleavage in the retro-aldol and decarboxylation reactions. The protein is Putative 4-hydroxy-4-methyl-2-oxoglutarate aldolase of Aromatoleum aromaticum (strain DSM 19018 / LMG 30748 / EbN1) (Azoarcus sp. (strain EbN1)).